A 164-amino-acid chain; its full sequence is NADH-quinone oxidoreductase subunit I (164 aa).

2 consecutive 4Fe-4S ferredoxin-type domains span residues 55-85 (LRRY…IDAE) and 95-124 (TRYD…EGPN). [4Fe-4S] cluster contacts are provided by Cys65, Cys68, Cys71, Cys75, Cys104, Cys107, Cys110, and Cys114.

Belongs to the complex I 23 kDa subunit family. In terms of assembly, NDH-1 is composed of 14 different subunits. Subunits NuoA, H, J, K, L, M, N constitute the membrane sector of the complex. [4Fe-4S] cluster serves as cofactor.

It localises to the cell inner membrane. It carries out the reaction a quinone + NADH + 5 H(+)(in) = a quinol + NAD(+) + 4 H(+)(out). NDH-1 shuttles electrons from NADH, via FMN and iron-sulfur (Fe-S) centers, to quinones in the respiratory chain. The immediate electron acceptor for the enzyme in this species is believed to be ubiquinone. Couples the redox reaction to proton translocation (for every two electrons transferred, four hydrogen ions are translocated across the cytoplasmic membrane), and thus conserves the redox energy in a proton gradient. The polypeptide is NADH-quinone oxidoreductase subunit I (Dinoroseobacter shibae (strain DSM 16493 / NCIMB 14021 / DFL 12)).